Reading from the N-terminus, the 203-residue chain is Dual specificity phosphatase 29 (203 aa).

Residues 47–193 (HVNQVWPRIY…LRALDIALQE (147 aa)) form the Tyrosine-protein phosphatase domain. 137-144 (HCVMGRSR) is a binding site for substrate. The active-site Phosphocysteine intermediate is Cys138.

This sequence belongs to the protein-tyrosine phosphatase family. Non-receptor class dual specificity subfamily.

Its subcellular location is the cytoplasm. The protein resides in the nucleus. It catalyses the reaction O-phospho-L-tyrosyl-[protein] + H2O = L-tyrosyl-[protein] + phosphate. It carries out the reaction O-phospho-L-seryl-[protein] + H2O = L-seryl-[protein] + phosphate. The enzyme catalyses O-phospho-L-threonyl-[protein] + H2O = L-threonyl-[protein] + phosphate. Dual specificity phosphatase able to dephosphorylate phosphotyrosine, phosphoserine and phosphothreonine residues within the same substrate, with a preference for phosphotyrosine as a substrate. Involved in the modulation of AMPK and MAPK1/2 signaling pathways. This Oryzias latipes (Japanese rice fish) protein is Dual specificity phosphatase 29 (dusp29).